We begin with the raw amino-acid sequence, 383 residues long: Lipid-A-disaccharide synthase (383 aa).

This sequence belongs to the LpxB family.

It carries out the reaction a lipid X + a UDP-2-N,3-O-bis[(3R)-3-hydroxyacyl]-alpha-D-glucosamine = a lipid A disaccharide + UDP + H(+). It participates in bacterial outer membrane biogenesis; LPS lipid A biosynthesis. Its function is as follows. Condensation of UDP-2,3-diacylglucosamine and 2,3-diacylglucosamine-1-phosphate to form lipid A disaccharide, a precursor of lipid A, a phosphorylated glycolipid that anchors the lipopolysaccharide to the outer membrane of the cell. This Aliivibrio salmonicida (strain LFI1238) (Vibrio salmonicida (strain LFI1238)) protein is Lipid-A-disaccharide synthase.